Consider the following 397-residue polypeptide: Elongation factor Tu (397 aa).

The region spanning 10-207 is the tr-type G domain; sequence KPHVNVGTVG…AIDAYVPDPV (198 aa). Positions 19–26 are G1; the sequence is GHIDHGKT. 19–26 is a GTP binding site; sequence GHIDHGKT. Thr26 is a binding site for Mg(2+). The G2 stretch occupies residues 60–64; that stretch reads GITIA. The tract at residues 81-84 is G3; that stretch reads DCPG. GTP contacts are provided by residues 81–85 and 136–139; these read DCPGH and NKVD. Residues 136 to 139 are G4; sequence NKVD. The G5 stretch occupies residues 174-176; it reads SAL.

This sequence belongs to the TRAFAC class translation factor GTPase superfamily. Classic translation factor GTPase family. EF-Tu/EF-1A subfamily. Monomer.

The protein resides in the cytoplasm. It catalyses the reaction GTP + H2O = GDP + phosphate + H(+). In terms of biological role, GTP hydrolase that promotes the GTP-dependent binding of aminoacyl-tRNA to the A-site of ribosomes during protein biosynthesis. This Syntrophobacter fumaroxidans (strain DSM 10017 / MPOB) protein is Elongation factor Tu.